We begin with the raw amino-acid sequence, 166 residues long: Large ribosomal subunit protein mL49 (166 aa).

The tract at residues 56 to 78 (RIPDPPKHEHYPTPSGWQPPRDP) is disordered.

The protein belongs to the mitochondrion-specific ribosomal protein mL49 family. As to quaternary structure, interacts with OXA1L.

It localises to the mitochondrion. This chain is Large ribosomal subunit protein mL49 (MRPL49), found in Macaca fascicularis (Crab-eating macaque).